The sequence spans 218 residues: Leucine-rich repeat protein 1 (218 aa).

The signal sequence occupies residues 1-27 (MASRNYRWELFAASLTLTLALIHLVEA). LRR repeat units lie at residues 94–117 (EHLQYLELYKNNIQGTIPSELGNL), 119–140 (NLISLDLYNNNLTGIVPTSLGK), 141–165 (LKSLVFLRLNDNRLTGPIPRALTAI), and 167–190 (SLKVVDVSSNDLCGTIPTNGPFAH).

Interacts with HIR1.

Functionally, involved in plant defense response. This is Leucine-rich repeat protein 1 from Arabidopsis thaliana (Mouse-ear cress).